Reading from the N-terminus, the 399-residue chain is Elongation factor Tu (399 aa).

The 195-residue stretch at Lys-10–Glu-204 folds into the tr-type G domain. A G1 region spans residues Gly-19–Thr-26. Gly-19–Thr-26 lines the GTP pocket. Thr-26 is a binding site for Mg(2+). Positions Gly-60–Asn-64 are G2. The interval Asp-81–Gly-84 is G3. GTP is bound by residues Asp-81–His-85 and Asn-136–Asp-139. Positions Asn-136 to Asp-139 are G4. The interval Ser-174–Leu-176 is G5.

The protein belongs to the TRAFAC class translation factor GTPase superfamily. Classic translation factor GTPase family. EF-Tu/EF-1A subfamily. Monomer.

It is found in the cytoplasm. It carries out the reaction GTP + H2O = GDP + phosphate + H(+). Functionally, GTP hydrolase that promotes the GTP-dependent binding of aminoacyl-tRNA to the A-site of ribosomes during protein biosynthesis. This chain is Elongation factor Tu, found in Synechococcus sp. (strain CC9902).